Here is a 722-residue protein sequence, read N- to C-terminus: MLEPPKFIENDCYNGSRTFTWLADMVGLSVDLVNFLICQISALFLASLFRSMLHPSKVSSKLRHTFALSIGLAFGYFCFGQQAIHIAGLPAICYIVIRTQDPRIVQRAVLLVAMSYLLCVHLMRQLYDYGSYALDITGPLMIITQKVTSLAFSIHDGFVRGDEELTKAQQYHAIRKMPSALEYFSYVWHFQSILAGPLVFYKDYIEFVEGYNLLSTPPGNGNLDSSKREVVLEPSPTKAVIRKVVGSLVCAFIFMKFVKIYPVKDMKEDDFMNNTSMVYKYWYAMMATTCIRFKYYHAWLLADAICNNSGLGFTGYDKDGNSKWDLISNINVLSFEFSTNMRDAINNWNCGTNRWLRTLVYERVPQQYGTLLTFALSAVWHGFYPGYYLTFATGAVVVTAARTGRRLFRHRFQSTQVTRMFYDILTCLITRVVLGYATFPFVLLEFMGSIKLYLRFYLCLHIISLVTIFILPKFIRGERRLRTSNGNGNVRLSGSGNTKDAVTTSVESTAALTAGNDLNEDKEEDKHAQCKVHTPTQQQPAAGPHKTTVEQPTEQPNNVNLRSRPQQQQPHLEKKAMPPTCARDAVSVPHDQCEMDQLSSKLKEKIEAETKNIEEFIDKTVTETVSGIVEFKNDLMRDIEFPKLKLPGSNGAISLDSSNGGGLRKRNISSVHDNGTDPGHATADLHPPLEENGAAFLKKEIEVINAVVQQAVPAVLSNGHAK.

The next 5 membrane-spanning stretches (helical) occupy residues Met25–Leu45, Leu62–Ile84, Ile104–Met123, Ala180–Phe200, and Lys243–Val263. Active-site residues include Asn349 and His381. 3 helical membrane passes run Ala378–Val398, Ile424–Leu444, and Leu452–Pro472. Composition is skewed to polar residues over residues Asn485 to Ala511 and Val549 to Pro570. Disordered regions lie at residues Asn485–Ala582 and Asn650–Pro687.

The protein belongs to the membrane-bound acyltransferase family.

Its subcellular location is the endoplasmic reticulum. The protein localises to the membrane. The enzyme catalyses a 1-acyl-sn-glycero-3-phospho-L-serine + an acyl-CoA = a 1,2-diacyl-sn-glycero-3-phospho-L-serine + CoA. It carries out the reaction 1-(9Z-octadecenoyl)-sn-glycero-3-phospho-L-serine + (9Z)-hexadecenoyl-CoA = 1-(9Z-octadecenoyl)-2-(9Z-hexadecenoyl)-sn-glycero-3-phospho-L-serine + CoA. The catalysed reaction is 1-(9Z-octadecenoyl)-sn-glycero-3-phospho-L-serine + (9Z)-octadecenoyl-CoA = 1,2-di-(9Z)-octadecenoyl-sn-glycero-3-phospho-L-serine + CoA. It catalyses the reaction a 1-acyl-sn-glycero-3-phosphocholine + an acyl-CoA = a 1,2-diacyl-sn-glycero-3-phosphocholine + CoA. The enzyme catalyses 1-hexadecanoyl-sn-glycero-3-phosphocholine + (9Z)-octadecenoyl-CoA = 1-hexadecanoyl-2-(9Z-octadecenoyl)-sn-glycero-3-phosphocholine + CoA. It carries out the reaction (9Z)-hexadecenoyl-CoA + 1-hexadecanoyl-sn-glycero-3-phosphocholine = 1-hexadecanoyl-2-(9Z-hexadecenoyl)-sn-glycero-3-phosphocholine + CoA. The catalysed reaction is a 1-acyl-sn-glycero-3-phosphoethanolamine + an acyl-CoA = a 1,2-diacyl-sn-glycero-3-phosphoethanolamine + CoA. It catalyses the reaction 1-hexadecanoyl-sn-glycero-3-phosphoethanolamine + (9Z)-octadecenoyl-CoA = 1-hexadecanoyl-2-(9Z-octadecenoyl)-sn-glycero-3-phosphoethanolamine + CoA. The enzyme catalyses 1-hexadecanoyl-sn-glycero-3-phosphoethanolamine + (9Z,12Z)-octadecadienoyl-CoA = 1-hexadecanoyl-2-(9Z,12Z-octadecadienoyl)-sn-glycero-3-phosphoethanolamine + CoA. It carries out the reaction 1-hexadecanoyl-sn-glycero-3-phosphoethanolamine + (9Z)-hexadecenoyl-CoA = 1-hexadecanoyl-2-(9Z)-hexadecenoyl-sn-glycero-3-phosphoethanolamine + CoA. The catalysed reaction is 1-(9Z-octadecenoyl)-sn-glycero-3-phospho-(1'-sn-glycerol) + (9Z)-octadecenoyl-CoA = 1,2-di-(9Z-octadecenoyl)-sn-glycero-3-phospho-(1'-sn-glycerol) + CoA. It participates in lipid metabolism; phospholipid metabolism. Acyltransferase with broad-specificity, that mediates the acylation of lysophospholipids to produce phospholipids (glycerophospholipids). Converts lysophosphatidylserine (1-acyl-2-hydroxy-sn-glycero-3-phospho-L-serine or LPS) to phosphatidylserine (1,2-diacyl-sn-glycero-3-phospho-L-serine or PS) (LPSAT activity), lysophosphatidylcholine (1-acyl-sn-glycero-3-phosphocholine or LPC) to phosphatidylcholine (1,2-diacyl-sn-glycero-3-phosphocholine or PC) (LPCAT activity), also lysophosphatidylethanolamine (1-acyl-sn-glycero-3-phosphochethanolamine or LPE) to phosphatidylchethanolamine (LPEAT activity) and lysophosphatidylglycerol (1-acyl-2-hydroxy-sn-glycero-3-phospho-(1'-sn-glycerol) or LPG) to phosphatidylglycerol (1,2-diacyl-sn-glycero-3-phospho-(1'-sn-glycerol) or PG) (LPGAT activity). Has a preference for unsaturated fatty acids of at least 16 carbons such as oleoyl-CoA ((9Z)-octadecenoyl-CoA) and palmitoleoyl-CoA ((9Z)-hexadecenoyl-CoA). Glycerophospholipids are important structural and functional components of cellular membrane, acyl-chain remodeling regulates the molecular species distribution of glycerophospholipids which can affect membrane fluidity and curvature. Essential for fertility and viability together with Nessy protein (Nes). The chain is Lysophospholipid acyltransferase 6 from Drosophila melanogaster (Fruit fly).